A 566-amino-acid polypeptide reads, in one-letter code: Phosphatidylinositol 3,4,5-trisphosphate 3-phosphatase TPTE2 (566 aa).

4 helical membrane-spanning segments follow: residues 135-155 (SFAF…LLLA), 173-193 (ISLA…FVEG), 208-228 (AIIV…IKFL), and 234-254 (WIHL…HLIH). The 177-residue stretch at 272–448 (RRYTRDGFDL…GYFAQVKHLY (177 aa)) folds into the Phosphatase tensin-type domain. The active-site Phosphocysteine intermediate is Cys-382. Residues 455 to 566 (RRILFIKRFI…ILHSFRLVFT (112 aa)) form the C2 tensin-type domain.

Its subcellular location is the endoplasmic reticulum membrane. The protein localises to the golgi apparatus membrane. The enzyme catalyses a 1,2-diacyl-sn-glycero-3-phospho-(1D-myo-inositol-3,4,5-trisphosphate) + H2O = a 1,2-diacyl-sn-glycero-3-phospho-(1D-myo-inositol-4,5-bisphosphate) + phosphate. Functionally, acts as a lipid phosphatase, removing the phosphate in the D3 position of the inositol ring from phosphatidylinositol 3,4,5-trisphosphate. The protein is Phosphatidylinositol 3,4,5-trisphosphate 3-phosphatase TPTE2 (TPTE2) of Macaca fascicularis (Crab-eating macaque).